A 119-amino-acid chain; its full sequence is gSG7 salivary protein (119 aa).

2 disulfides stabilise this stretch: Cys-58–Cys-113 and Cys-81–Cys-91.

Its subcellular location is the secreted. The activity is increased in the presence of host properdin (CFP). Functionally, salivary protein that inhibits the alternative pathway of complement system activation in the host while having no inhibitory effect on the classical pathway. Inhibits activity of activated host C3-convertase complex C3bBb (C3-CFB). Enhances accumulation of C3bBb on immobilized properdin. This is gSG7 salivary protein from Anopheles freeborni (Western malaria mosquito).